Consider the following 266-residue polypeptide: MYQVVASDLDGTLLSPDHTLSPYAKETLKLLTARGINFVFATGRHHVDVGQIRDNLEIKSYMITSNGARVHDLDGNLIFAHNLDRDIASDLFGVVNDNPDIITNVYRDDEWFMNRHRPEEMRFFKEAVFQYALYEPGLLEPEGVSKVFFTCDSHEQLLPLEQAINARWGDRVNVSFSTLTCLEVMAGGVSKGHALEAVAKKLGYSLKDCIAFGDGMNDAEMLSMAGKGCIMGSAHQRLKDLHPELEVIGTNADDAVPHYLRKLYLS.

Asp8 functions as the Nucleophile in the catalytic mechanism. Asp8 lines the Mg(2+) pocket. Leu9 contributes to the phosphate binding site. Asp10 contributes to the Mg(2+) binding site. Phosphate is bound by residues 42–43 and Lys191; that span reads TG. Asp214 provides a ligand contact to Mg(2+). Asn217 is a phosphate binding site.

It belongs to the HAD-like hydrolase superfamily. Cof family. Mg(2+) is required as a cofactor. Mn(2+) serves as cofactor. It depends on Co(2+) as a cofactor. Requires Zn(2+) as cofactor.

It catalyses the reaction pyridoxal 5'-phosphate + H2O = pyridoxal + phosphate. The catalysed reaction is sugar phosphate + H2O = sugar + phosphate.. Its function is as follows. Catalyzes Strongly the dephosphorylation of pyridoxal-phosphate (PLP) and moderately the dephosphorylation of 2-deoxyglucose 6-phosphate (2bGLU6P) and beta-glucose 6-phosphate (bGlu6P). Also hydrolyzes both purines (GMP and IMP) and pyrimidines as secondary substrates. This chain is Pyridoxal phosphate phosphatase YigL (yigL), found in Escherichia coli (strain K12).